A 209-amino-acid polypeptide reads, in one-letter code: Ribonuclease HII (209 aa).

The region spanning Gly19–Ala208 is the RNase H type-2 domain. Residues Asp25, Glu26, and Asp117 each coordinate a divalent metal cation.

It belongs to the RNase HII family. The cofactor is Mn(2+). It depends on Mg(2+) as a cofactor.

The protein localises to the cytoplasm. The catalysed reaction is Endonucleolytic cleavage to 5'-phosphomonoester.. Its function is as follows. Endonuclease that specifically degrades the RNA of RNA-DNA hybrids. In Acidovorax ebreus (strain TPSY) (Diaphorobacter sp. (strain TPSY)), this protein is Ribonuclease HII.